Here is a 160-residue protein sequence, read N- to C-terminus: Nucleotide-binding protein BAV0791 (160 aa).

It belongs to the YajQ family.

Nucleotide-binding protein. The protein is Nucleotide-binding protein BAV0791 of Bordetella avium (strain 197N).